A 438-amino-acid chain; its full sequence is MADYQGKNVVIIGLGLTGLSCVDFFLARGVTPRVMDTRMTPPGLDKLPEAVERHTGSLNDEWLMAADLIVASPGIALAHPSLSAAADAGIEIVGDIELFCREAQAPIVAITGSNGKSTVTTLVGEMAKAAGVNVGVGGNIGLPALMLLDDECELYVLELSSFQLETTSSLQAVAATILNVTEDHMDRYPFGLQQYRAAKLRIYENAKVCVVNADDALTMPIRGADERCVSFGVNMGDYHLNHQQGETWLRVKGEKVLNVKEMKLSGQHNYTNALAALALADAAGLPRASSLKALTTFTGLPHRFEVVLEHNGVRWINDSKATNVGSTEAALNGLHVDGTLHLLLGGDGKSADFSPLARYLNGDNVRLYCFGRDGVQLAALRPEVAEKTETMEQAMRLLAPRVQPGDMVLLSPACASLDQFKNFEQRGNEFARLAKELG.

112–118 (GSNGKST) serves as a coordination point for ATP.

Belongs to the MurCDEF family.

The protein localises to the cytoplasm. It carries out the reaction UDP-N-acetyl-alpha-D-muramoyl-L-alanine + D-glutamate + ATP = UDP-N-acetyl-alpha-D-muramoyl-L-alanyl-D-glutamate + ADP + phosphate + H(+). It functions in the pathway cell wall biogenesis; peptidoglycan biosynthesis. Functionally, cell wall formation. Catalyzes the addition of glutamate to the nucleotide precursor UDP-N-acetylmuramoyl-L-alanine (UMA). The sequence is that of UDP-N-acetylmuramoylalanine--D-glutamate ligase from Shigella dysenteriae serotype 1 (strain Sd197).